A 217-amino-acid polypeptide reads, in one-letter code: Uridylate kinase (217 aa).

6 to 10 (KISGR) serves as a coordination point for ATP. Residue Gly-38 participates in UMP binding. Residues Gly-39 and Arg-43 each contribute to the ATP site. Residues Asp-60 and 107 to 113 (FQPGQST) contribute to the UMP site. ATP contacts are provided by Asn-134, Tyr-139, and Asp-142.

Belongs to the UMP kinase family. As to quaternary structure, homohexamer.

It is found in the cytoplasm. It carries out the reaction UMP + ATP = UDP + ADP. Its pathway is pyrimidine metabolism; CTP biosynthesis via de novo pathway; UDP from UMP (UMPK route): step 1/1. Its activity is regulated as follows. Inhibited by UTP. In terms of biological role, catalyzes the reversible phosphorylation of UMP to UDP. The chain is Uridylate kinase from Pyrobaculum arsenaticum (strain DSM 13514 / JCM 11321 / PZ6).